Consider the following 271-residue polypeptide: Oligodendrocyte transcription factor 1 (271 aa).

The disordered stretch occupies residues 38-117 (YRQPPSSSSS…RKINSRERKR (80 aa)). A compositionally biased stretch (low complexity) spans 43–61 (SSSSSSTSSTSSTSSSSTT). In terms of domain architecture, bHLH spans 105–164 (QLRRKINSRERKRMQDLNLAMDALREVILPYSAAHCQGAPGRKLSKIATLLLARNYILLL).

In terms of tissue distribution, expressed in the brain, in oligodendrocytes. Strongly expressed in oligodendrogliomas, while expression is weak to moderate in astrocytomas. Expression in glioblastomas is highly variable.

It is found in the nucleus. Its function is as follows. Promotes formation and maturation of oligodendrocytes, especially within the brain. Cooperates with OLIG2 to establish the pMN domain of the embryonic neural tube. The protein is Oligodendrocyte transcription factor 1 (OLIG1) of Homo sapiens (Human).